The sequence spans 448 residues: Putative F-box/LRR-repeat protein At5g25860 (448 aa).

Residues 11 to 58 enclose the F-box domain; that stretch reads RDAVNCLPDEILAKILSYLPTKRAVSTSLISKRWRNLFALMIQLFESQ. 5 LRR repeats span residues 82 to 106, 185 to 214, 215 to 240, 310 to 341, and 342 to 367; these read QESF…SILC, FLHA…FLHD, LRGY…TVHF, TLSL…YFES, and NEKE…VLKG.

The protein is Putative F-box/LRR-repeat protein At5g25860 of Arabidopsis thaliana (Mouse-ear cress).